A 141-amino-acid polypeptide reads, in one-letter code: Hemoglobin subunit alpha (141 aa).

The interval 1 to 22 (VLSEDDKNRVRTSVGKNPELPG) is disordered. Positions 1-141 (VLSEDDKNRV…VSEVLESKYR (141 aa)) constitute a Globin domain. His-58 lines the O2 pocket. His-87 serves as a coordination point for heme b.

The protein belongs to the globin family. In terms of assembly, heterotetramer of two alpha chains and two beta chains. In terms of tissue distribution, red blood cells.

In terms of biological role, involved in oxygen transport from the lung to the various peripheral tissues. In Vipera aspis (Aspic viper), this protein is Hemoglobin subunit alpha (HBA).